Here is a 926-residue protein sequence, read N- to C-terminus: Beta-mannosidase A (926 aa).

The signal sequence occupies residues M1–G21. N-linked (GlcNAc...) asparagine glycosylation is found at N40, N242, N277, N311, and N342. The active-site Proton donor is E474. N-linked (GlcNAc...) asparagine glycans are attached at residues N532, N603, N626, N653, N733, N756, N785, N793, N819, and N905.

It belongs to the glycosyl hydrolase 2 family. Beta-mannosidase A subfamily. Homodimer.

The protein localises to the secreted. It carries out the reaction Hydrolysis of terminal, non-reducing beta-D-mannose residues in beta-D-mannosides.. It participates in glycan metabolism; N-glycan degradation. Exoglycosidase that cleaves the single beta-linked mannose residue from the non-reducing end of beta-mannosidic oligosaccharides of various complexity and length. Involved in the degradation of polymeric mannan and galactomannan. The polypeptide is Beta-mannosidase A (mndA) (Aspergillus fumigatus (strain ATCC MYA-4609 / CBS 101355 / FGSC A1100 / Af293) (Neosartorya fumigata)).